We begin with the raw amino-acid sequence, 576 residues long: K(+)/H(+) antiporter NhaP2 (576 aa).

13 helical membrane-spanning segments follow: residues 6-26 (INSF…LSPM), 34-54 (ILLI…GGIL), 58-78 (YSTA…DGGM), 87-107 (VALW…TSIT), 109-129 (MMAA…GAIV), 163-183 (PMAV…DTEM), 185-205 (FSFM…LGLG), 219-239 (LADG…YAAS), 242-262 (LGGS…NKPT), 271-291 (VLDG…GLLL), 299-319 (ILIP…PVAV), 335-355 (WFIS…VFPM), and 359-379 (LPGA…SLLV). The 82-residue stretch at 405–486 (SGVEIYPSSE…LEALSNLFSQ (82 aa)) folds into the RCK C-terminal domain.

Belongs to the monovalent cation:proton antiporter 1 (CPA1) transporter (TC 2.A.36) family. NhaP2 subfamily.

The protein localises to the cell inner membrane. It catalyses the reaction K(+)(in) + H(+)(out) = K(+)(out) + H(+)(in). Its function is as follows. K(+)/H(+) antiporter that extrudes potassium in exchange for external protons and maintains the internal concentration of potassium under toxic levels. This Shewanella baltica (strain OS155 / ATCC BAA-1091) protein is K(+)/H(+) antiporter NhaP2.